A 287-amino-acid chain; its full sequence is 4-hydroxybenzoate octaprenyltransferase (287 aa).

Helical transmembrane passes span 23–40, 98–118, 141–161, 163–183, 213–233, and 235–255; these read IGSLLLLWPTLWALWLAG, ILFVVLVLLAFGLVLTLNKMT, LPQFVLGAAFGWSIPMAYAAV, ESLPATCWMMFLAYICWTVAY, IIIGLLQFSMLALLLALGNIT, and LGIPYTISLLVAAGMFIYQQI.

It belongs to the UbiA prenyltransferase family. The cofactor is Mg(2+).

It localises to the cell inner membrane. It carries out the reaction all-trans-octaprenyl diphosphate + 4-hydroxybenzoate = 4-hydroxy-3-(all-trans-octaprenyl)benzoate + diphosphate. Its pathway is cofactor biosynthesis; ubiquinone biosynthesis. Catalyzes the prenylation of para-hydroxybenzoate (PHB) with an all-trans polyprenyl group. Mediates the second step in the final reaction sequence of ubiquinone-8 (UQ-8) biosynthesis, which is the condensation of the polyisoprenoid side chain with PHB, generating the first membrane-bound Q intermediate 3-octaprenyl-4-hydroxybenzoate. In Pectobacterium atrosepticum (strain SCRI 1043 / ATCC BAA-672) (Erwinia carotovora subsp. atroseptica), this protein is 4-hydroxybenzoate octaprenyltransferase.